Reading from the N-terminus, the 339-residue chain is Glycerol-3-phosphate dehydrogenase [NAD(P)+] (339 aa).

Residues Ser-15, Tyr-16, His-36, and Lys-110 each coordinate NADPH. The sn-glycerol 3-phosphate site is built by Lys-110, Gly-139, and Thr-141. Position 143 (Ala-143) interacts with NADPH. Positions 195, 248, 258, 259, and 260 each coordinate sn-glycerol 3-phosphate. Lys-195 (proton acceptor) is an active-site residue. Position 259 (Arg-259) interacts with NADPH. The NADPH site is built by Val-283 and Glu-285.

This sequence belongs to the NAD-dependent glycerol-3-phosphate dehydrogenase family.

Its subcellular location is the cytoplasm. It catalyses the reaction sn-glycerol 3-phosphate + NAD(+) = dihydroxyacetone phosphate + NADH + H(+). The catalysed reaction is sn-glycerol 3-phosphate + NADP(+) = dihydroxyacetone phosphate + NADPH + H(+). The protein operates within membrane lipid metabolism; glycerophospholipid metabolism. Its function is as follows. Catalyzes the reduction of the glycolytic intermediate dihydroxyacetone phosphate (DHAP) to sn-glycerol 3-phosphate (G3P), the key precursor for phospholipid synthesis. In Enterobacter sp. (strain 638), this protein is Glycerol-3-phosphate dehydrogenase [NAD(P)+].